The following is a 363-amino-acid chain: NAD(P)H-quinone oxidoreductase subunit 1, chloroplastic (363 aa).

6 consecutive transmembrane segments (helical) span residues 30–50 (LVPILTLVLGITIGVLVIVWL), 98–118 (FSIGPAIAVISILLSFSVIPF), 129–149 (IGIFLWIAISSIAPVGLLMSG), 248–268 (YSGIKFGLFYVASYLNLLLSS), 300–320 (IIGTTIGIFITLAKTYLFLFI), and 343–363 (FLLPISLGNLLLTTSFQLLSL).

The protein belongs to the complex I subunit 1 family. In terms of assembly, NDH is composed of at least 16 different subunits, 5 of which are encoded in the nucleus.

The protein localises to the plastid. The protein resides in the chloroplast thylakoid membrane. The enzyme catalyses a plastoquinone + NADH + (n+1) H(+)(in) = a plastoquinol + NAD(+) + n H(+)(out). It catalyses the reaction a plastoquinone + NADPH + (n+1) H(+)(in) = a plastoquinol + NADP(+) + n H(+)(out). In terms of biological role, NDH shuttles electrons from NAD(P)H:plastoquinone, via FMN and iron-sulfur (Fe-S) centers, to quinones in the photosynthetic chain and possibly in a chloroplast respiratory chain. The immediate electron acceptor for the enzyme in this species is believed to be plastoquinone. Couples the redox reaction to proton translocation, and thus conserves the redox energy in a proton gradient. This Gossypium hirsutum (Upland cotton) protein is NAD(P)H-quinone oxidoreductase subunit 1, chloroplastic.